Reading from the N-terminus, the 48-residue chain is TDCGGKTCSEAQVCKDGKCVCVIGQCRKYCPNGFKKDENGCTFPCTCA.

Cystine bridges form between C3–C14, C8–C19, C21–C41, C26–C45, and C30–C47. An Antistasin-like domain is found at 19–47 (CVCVIGQCRKYCPNGFKKDENGCTFPCTC).

This sequence belongs to the protease inhibitor I15 (antistasin) family.

Its subcellular location is the secreted. Inhibits plasma and tissue kallikrein, and trypsin. May be involved in leech hematophagia. This chain is Piguamerin, found in Hirudo nipponia (Korean blood-sucking leech).